A 397-amino-acid polypeptide reads, in one-letter code: Phosphoglycerate kinase (397 aa).

Residues 23-25 (DFN), Arg38, 61-64 (HMGK), Arg122, and Arg155 each bind substrate. Residues Lys206, Gly296, Glu327, and 353 to 356 (GGDS) each bind ATP.

This sequence belongs to the phosphoglycerate kinase family. In terms of assembly, monomer.

It is found in the cytoplasm. The enzyme catalyses (2R)-3-phosphoglycerate + ATP = (2R)-3-phospho-glyceroyl phosphate + ADP. Its pathway is carbohydrate degradation; glycolysis; pyruvate from D-glyceraldehyde 3-phosphate: step 2/5. In Clostridium perfringens (strain ATCC 13124 / DSM 756 / JCM 1290 / NCIMB 6125 / NCTC 8237 / Type A), this protein is Phosphoglycerate kinase.